The sequence spans 488 residues: Dipeptide and tripeptide permease A (488 aa).

Residues 1-35 (MSTANTPEDEQKPSLNAFKQPRAFYLIFSIELWER) lie on the Cytoplasmic side of the membrane. A helical membrane pass occupies residues 36 to 56 (FGYYGLQGIMAVYLVKMLGMS). Residues 57 to 60 (EAEA) lie on the Periplasmic side of the membrane. The helical transmembrane segment at 61-81 (ITVFAAFTALVYGFVAIGGWL) threads the bilayer. Topologically, residues 82–90 (GDKILGTKR) are cytoplasmic. Residues 91–111 (VIVLGAIVLAIGYAMVAFSDH) form a helical membrane-spanning segment. Residues 112–114 (DKD) are Periplasmic-facing. A helical membrane pass occupies residues 115–135 (MIYWGLATIAVGNGLFKANPS). At 136-154 (SLLATCYEKDDPQLDGAFT) the chain is on the cytoplasmic side. The helical transmembrane segment at 155 to 175 (MYYMSINVGSFLSMLATPWLA) threads the bilayer. Over 176–179 (ANYG) the chain is Periplasmic. The helical transmembrane segment at 180–200 (WDVAFALSVVGMLITLANFML) threads the bilayer. Residues 201 to 219 (CRGWIKDKGSRPDFEPLNY) are Cytoplasmic-facing. A helical membrane pass occupies residues 220–240 (LKLLLTLVGIVALTAVSTWLL). Position 241 (His241) is a topological domain, periplasmic. A helical transmembrane segment spans residues 242 to 262 (NNEVATWSLAIISLGIILIFA). Residues 263-275 (RETFMMKGVARRK) lie on the Cytoplasmic side of the membrane. A helical membrane pass occupies residues 276 to 296 (MIVAFLLMVEAVVFFVLYDQM). The Periplasmic segment spans residues 297–324 (PTSLNFFAIHNVEHAILGFSVEPEQFQS). A helical transmembrane segment spans residues 325-345 (LNPFWIMLASPLLAAIYNFMG). Residues 346–353 (DKLPMPYK) are Cytoplasmic-facing. The helical transmembrane segment at 354–374 (FTVGMFLSATAFLVLPLGASM) threads the bilayer. Topologically, residues 375–391 (ANEAGIVSSWWLVASYG) are periplasmic. The helical transmembrane segment at 392–412 (FQSIGELMISGLGLAMVAQLV) threads the bilayer. The Cytoplasmic segment spans residues 413-415 (PQR). Residues 416–436 (LMGFIMGAWFLTSAAAAIIAG) form a helical membrane-spanning segment. The Periplasmic portion of the chain corresponds to 437 to 460 (KVASLMAVPEDVQNAHASLEIYSS). Residues 461-481 (VFLQIGIVTGVIALLMLFTAP) traverse the membrane as a helical segment. At 482 to 488 (MLSKMTQ) the chain is on the cytoplasmic side.

Belongs to the major facilitator superfamily. Proton-dependent oligopeptide transporter (POT/PTR) (TC 2.A.17) family. DtpA subfamily.

The protein localises to the cell inner membrane. In terms of biological role, proton-dependent permease that transports di- and tripeptides. This is Dipeptide and tripeptide permease A from Proteus mirabilis (strain HI4320).